Consider the following 353-residue polypeptide: S-adenosylmethionine:tRNA ribosyltransferase-isomerase (353 aa).

Belongs to the QueA family. As to quaternary structure, monomer.

Its subcellular location is the cytoplasm. It carries out the reaction 7-aminomethyl-7-carbaguanosine(34) in tRNA + S-adenosyl-L-methionine = epoxyqueuosine(34) in tRNA + adenine + L-methionine + 2 H(+). It functions in the pathway tRNA modification; tRNA-queuosine biosynthesis. Transfers and isomerizes the ribose moiety from AdoMet to the 7-aminomethyl group of 7-deazaguanine (preQ1-tRNA) to give epoxyqueuosine (oQ-tRNA). This chain is S-adenosylmethionine:tRNA ribosyltransferase-isomerase, found in Cupriavidus metallidurans (strain ATCC 43123 / DSM 2839 / NBRC 102507 / CH34) (Ralstonia metallidurans).